The following is a 179-amino-acid chain: Large ribosomal subunit protein uL5c (179 aa).

This sequence belongs to the universal ribosomal protein uL5 family. Part of the 50S ribosomal subunit; contacts the 5S rRNA.

Its subcellular location is the plastid. The protein localises to the chloroplast. Binds 5S rRNA, forms part of the central protuberance of the 50S subunit. The polypeptide is Large ribosomal subunit protein uL5c (rpl5) (Gracilaria tenuistipitata var. liui (Red alga)).